We begin with the raw amino-acid sequence, 225 residues long: Guanylate kinase (225 aa).

Residues 20–198 (GNLFMVVAPS…ALSELQCLVA (179 aa)) form the Guanylate kinase-like domain. 27–34 (APSGAGKS) provides a ligand contact to ATP.

The protein belongs to the guanylate kinase family.

It is found in the cytoplasm. The enzyme catalyses GMP + ATP = GDP + ADP. Functionally, essential for recycling GMP and indirectly, cGMP. In Paraburkholderia xenovorans (strain LB400), this protein is Guanylate kinase.